A 176-amino-acid chain; its full sequence is Superoxide oxidase CybB (176 aa).

Over 1-7 the chain is Cytoplasmic; that stretch reads MENKYSR. The helical transmembrane segment at 8 to 29 threads the bilayer; the sequence is LQISIHWLVFLLVIAAYCAMEF. Histidine 13 contributes to the heme b binding site. Over 30-39 the chain is Periplasmic; that stretch reads RGFFPRSDRP. The helical transmembrane segment at 40 to 64 threads the bilayer; sequence LINMIHVSCGISILVLMVVRLLLRL. Histidine 45 provides a ligand contact to heme b. Over 65–77 the chain is Cytoplasmic; the sequence is KYPTPPIIPKPKP. Residues 78-103 form a helical membrane-spanning segment; it reads MMTGLAHLGHLVIYLLFIALPVIGLV. Topologically, residues 104-135 are periplasmic; sequence MMYNRGNPWFAFGLTMPYASEANFERVDSLKS. The chain crosses the membrane as a helical span at residues 136 to 158; sequence WHETLANLGYFVIGLHAAAALAH. Residues histidine 137 and histidine 151 each contribute to the heme b site. Residues 159–176 lie on the Cytoplasmic side of the membrane; that stretch reads HYFWKDNTLLRMMPRKRS.

This sequence belongs to the cytochrome b561 family. As to quaternary structure, monomer. Heme b is required as a cofactor.

The protein resides in the cell inner membrane. It carries out the reaction a ubiquinol + 2 O2 = 2 superoxide + a ubiquinone + 2 H(+). The catalysed reaction is a menaquinol + 2 O2 = 2 superoxide + a menaquinone + 2 H(+). Its activity is regulated as follows. Quinone binding to the enzyme accelerates the reaction with superoxide. Functionally, B-type di-heme cytochrome. Catalyzes the oxidation of superoxide to molecular oxygen and transfers the extracted electrons to ubiquinone through the two hemes. Can also use menaquinone. The enzyme may be responsible for the detoxification of the superoxide anion produced in the membrane or at its surface. However, it can also efficiently catalyze the formation of superoxide from ubiquinol under physiological conditions. This is Superoxide oxidase CybB from Escherichia coli (strain K12).